Consider the following 251-residue polypeptide: Ubiquinone/menaquinone biosynthesis C-methyltransferase UbiE (251 aa).

Residues Thr-74, Asp-95, and 123-124 (NA) each bind S-adenosyl-L-methionine.

It belongs to the class I-like SAM-binding methyltransferase superfamily. MenG/UbiE family.

The catalysed reaction is a 2-demethylmenaquinol + S-adenosyl-L-methionine = a menaquinol + S-adenosyl-L-homocysteine + H(+). The enzyme catalyses a 2-methoxy-6-(all-trans-polyprenyl)benzene-1,4-diol + S-adenosyl-L-methionine = a 5-methoxy-2-methyl-3-(all-trans-polyprenyl)benzene-1,4-diol + S-adenosyl-L-homocysteine + H(+). It participates in quinol/quinone metabolism; menaquinone biosynthesis; menaquinol from 1,4-dihydroxy-2-naphthoate: step 2/2. It functions in the pathway cofactor biosynthesis; ubiquinone biosynthesis. In terms of biological role, methyltransferase required for the conversion of demethylmenaquinol (DMKH2) to menaquinol (MKH2) and the conversion of 2-polyprenyl-6-methoxy-1,4-benzoquinol (DDMQH2) to 2-polyprenyl-3-methyl-6-methoxy-1,4-benzoquinol (DMQH2). This chain is Ubiquinone/menaquinone biosynthesis C-methyltransferase UbiE, found in Shewanella oneidensis (strain ATCC 700550 / JCM 31522 / CIP 106686 / LMG 19005 / NCIMB 14063 / MR-1).